The following is a 269-amino-acid chain: Tryptophan synthase alpha chain (269 aa).

Residues E49 and D60 each act as proton acceptor in the active site.

It belongs to the TrpA family. In terms of assembly, tetramer of two alpha and two beta chains.

The enzyme catalyses (1S,2R)-1-C-(indol-3-yl)glycerol 3-phosphate + L-serine = D-glyceraldehyde 3-phosphate + L-tryptophan + H2O. Its pathway is amino-acid biosynthesis; L-tryptophan biosynthesis; L-tryptophan from chorismate: step 5/5. Functionally, the alpha subunit is responsible for the aldol cleavage of indoleglycerol phosphate to indole and glyceraldehyde 3-phosphate. This Delftia acidovorans (strain DSM 14801 / SPH-1) protein is Tryptophan synthase alpha chain.